Consider the following 764-residue polypeptide: Metabotropic glutamate receptor-like protein H (764 aa).

Positions 1-20 (MKNILKILILILICINKINC) are cleaved as a signal peptide. The Extracellular segment spans residues 21–393 (LDGDGKQFRM…EVEFSQSIQN (373 aa)). Residues Asn72, Asn260, Asn278, Asn344, and Asn379 are each glycosylated (N-linked (GlcNAc...) asparagine). The chain crosses the membrane as a helical span at residues 394–414 (GFSITTGILIGITILMMIGII). Residues 415–427 (KYSKTPSMRSASP) are Cytoplasmic-facing. A helical transmembrane segment spans residues 428-448 (IFLNFILAGGIIVYIGIIVWV). Topologically, residues 449–464 (GPMSTHSCNARLWLVT) are extracellular. Residues 465 to 485 (LGFSTLIGSLVVKNFRIWLIF) traverse the membrane as a helical segment. Topologically, residues 486–500 (DNPELKSIKITNYQL) are cytoplasmic. A helical membrane pass occupies residues 501–521 (FPWVGACLVINIILMAILTSV). Residues 522-552 (GDLKQIDAMNIDSLGKYEYMKVCKMNSSGAS) are Extracellular-facing. A glycan (N-linked (GlcNAc...) asparagine) is linked at Asn547. Residues 553–573 (TLYTILAYFAALLLVGVFVSW) traverse the membrane as a helical segment. Over 574–587 (KIRIVDILEFNESG) the chain is Cytoplasmic. A helical membrane pass occupies residues 588–608 (AIANTLYAISFCLFVIVPLMI). Residues 609–617 (SPQDMQSET) lie on the Extracellular side of the membrane. A helical membrane pass occupies residues 618–638 (IILCTTGLFITTAALLIIFIP). At 639–764 (KFWRVFRKGA…IIVNDSENNN (126 aa)) the chain is on the cytoplasmic side. Positions 664–764 (ATARAESGSK…IIVNDSENNN (101 aa)) are disordered. Over residues 671 to 690 (GSKGSNGNASSGNRTNRRGN) the composition is skewed to low complexity. The span at 707–719 (ENQKEKEKIKDDV) shows a compositional bias: basic and acidic residues. Residues 731–748 (FTDEASDTDNNEFNDIEL) are compositionally biased toward acidic residues.

In the N-terminal section; belongs to the BMP lipoprotein family. It in the C-terminal section; belongs to the G-protein coupled receptor 3 family. GABA-B receptor subfamily.

The protein resides in the membrane. The polypeptide is Metabotropic glutamate receptor-like protein H (grlH) (Dictyostelium discoideum (Social amoeba)).